Consider the following 381-residue polypeptide: Succinyl-diaminopimelate desuccinylase (381 aa).

His68 provides a ligand contact to Zn(2+). Residue Asp70 is part of the active site. Asp101 lines the Zn(2+) pocket. Catalysis depends on Glu135, which acts as the Proton acceptor. The Zn(2+) site is built by Glu136, Glu164, and His350.

The protein belongs to the peptidase M20A family. DapE subfamily. As to quaternary structure, homodimer. Zn(2+) serves as cofactor. Co(2+) is required as a cofactor.

The enzyme catalyses N-succinyl-(2S,6S)-2,6-diaminopimelate + H2O = (2S,6S)-2,6-diaminopimelate + succinate. It functions in the pathway amino-acid biosynthesis; L-lysine biosynthesis via DAP pathway; LL-2,6-diaminopimelate from (S)-tetrahydrodipicolinate (succinylase route): step 3/3. In terms of biological role, catalyzes the hydrolysis of N-succinyl-L,L-diaminopimelic acid (SDAP), forming succinate and LL-2,6-diaminopimelate (DAP), an intermediate involved in the bacterial biosynthesis of lysine and meso-diaminopimelic acid, an essential component of bacterial cell walls. The polypeptide is Succinyl-diaminopimelate desuccinylase (Neisseria meningitidis serogroup C / serotype 2a (strain ATCC 700532 / DSM 15464 / FAM18)).